The primary structure comprises 618 residues: Carbamoyl phosphate synthase large chain, C-terminal section (618 aa).

The tract at residues 1-78 (MDMEKLKEIL…ETFVYKEQDE (78 aa)) is oligomerization domain. Residues 79-477 (SNPSDRKKVI…YKAQLSANME (399 aa)) are carbamoyl phosphate synthetic domain. In terms of domain architecture, ATP-grasp spans 208-399 (SKLLKKLNIP…LAKLATKIML (192 aa)). ATP-binding residues include Arg-244, Lys-283, Leu-285, Glu-290, Gly-315, Val-316, His-317, Ser-318, Gln-358, and Glu-370. Mg(2+) is bound by residues Gln-358, Glu-370, and Asn-372. Residues Gln-358, Glu-370, and Asn-372 each contribute to the Mn(2+) site. Residues 476–618 (MELPIVGNVF…ELDARIKNRF (143 aa)) form the MGS-like domain. The interval 478 to 618 (LPIVGNVFIS…ELDARIKNRF (141 aa)) is allosteric domain.

Belongs to the CarB family. In terms of assembly, composed of two chains; the small (or glutamine) chain promotes the hydrolysis of glutamine to ammonia, which is used by the large (or ammonia) chain to synthesize carbamoyl phosphate. Tetramer of heterodimers (alpha,beta)4. Mg(2+) is required as a cofactor. It depends on Mn(2+) as a cofactor.

The enzyme catalyses hydrogencarbonate + L-glutamine + 2 ATP + H2O = carbamoyl phosphate + L-glutamate + 2 ADP + phosphate + 2 H(+). The catalysed reaction is hydrogencarbonate + NH4(+) + 2 ATP = carbamoyl phosphate + 2 ADP + phosphate + 2 H(+). It functions in the pathway amino-acid biosynthesis; L-arginine biosynthesis; carbamoyl phosphate from bicarbonate: step 1/1. The protein operates within pyrimidine metabolism; UMP biosynthesis via de novo pathway; (S)-dihydroorotate from bicarbonate: step 1/3. Its function is as follows. Large subunit of the glutamine-dependent carbamoyl phosphate synthetase (CPSase). CPSase catalyzes the formation of carbamoyl phosphate from the ammonia moiety of glutamine, carbonate, and phosphate donated by ATP, constituting the first step of 2 biosynthetic pathways, one leading to arginine and/or urea and the other to pyrimidine nucleotides. The large subunit (synthetase) binds the substrates ammonia (free or transferred from glutamine from the small subunit), hydrogencarbonate and ATP and carries out an ATP-coupled ligase reaction, activating hydrogencarbonate by forming carboxy phosphate which reacts with ammonia to form carbamoyl phosphate. The polypeptide is Carbamoyl phosphate synthase large chain, C-terminal section (carB2) (Methanocaldococcus jannaschii (strain ATCC 43067 / DSM 2661 / JAL-1 / JCM 10045 / NBRC 100440) (Methanococcus jannaschii)).